Consider the following 356-residue polypeptide: Popeye domain-containing protein 1 (356 aa).

The Extracellular portion of the chain corresponds to 1–48 (MNFTEPSPLAQSTVVGFLPELESLTPVPSNETSCENWREVHHLVFHAA). N-linked (GlcNAc...) asparagine glycosylation is found at N2 and N30. A helical transmembrane segment spans residues 49–69 (NVCFAVGLLIPTTLHLHMILL). Residue R70 is a topological domain, cytoplasmic. Residues 71 to 91 (VMLSIGCTLYVVWATLYRCAL) form a helical membrane-spanning segment. A topological domain (extracellular) is located at residue D92. Residues 93-113 (MMIWNSVFLGINILHLSYLLY) traverse the membrane as a helical segment. Positions 93–115 (MMIWNSVFLGINILHLSYLLYKK) are required for interaction with CAV3. The Cytoplasmic portion of the chain corresponds to 114 to 356 (KKRPVKIEKD…VPVSPAHQLP (243 aa)). The required for interaction with KCNK2 stretch occupies residues 136–186 (RVPPDLFRRLTGQFCVIQTLKRGQVYATEDKTSVDDRLSILLKGRMKVSYR). 2 positions are modified to phosphoserine: S295 and S318. Positions 313 to 323 (SSSTASLPMSS) are enriched in low complexity. The interval 313–356 (SSSTASLPMSSPQQRASPKMKPIEEGLEDDDEVFVPVSPAHQLP) is disordered.

The protein belongs to the popeye family. As to quaternary structure, homodimer. Homodimerization requires the C-terminus cytoplasmic region. Interacts (via the C-terminus cytoplasmic tail) with TJP1. Interacts (via the C-terminus cytoplasmic tail) with ARHGEF25/GEFT (via the DH domain). Interacts (via the C-terminus cytoplasmic tail) with VAMP3. Interacts with KCNK2; the interaction enhances KCNK2 surface expression and is inhibited by cAMP. Interacts with CAV3. As to expression, strongly expressed in heart and skeletal muscle. Weakly expressed in brain, spleen, liver, kidney and lung.

It is found in the lateral cell membrane. The protein localises to the cell junction. It localises to the tight junction. The protein resides in the membrane. Its subcellular location is the cell membrane. It is found in the sarcolemma. The protein localises to the caveola. In terms of biological role, cell adhesion molecule involved in the establishment and/or maintenance of cell integrity. Involved in the formation and regulation of the tight junction (TJ) paracellular permeability barrier in epithelial cells. Plays a role in VAMP3-mediated vesicular transport and recycling of different receptor molecules through its interaction with VAMP3. Plays a role in the regulation of cell shape and movement by modulating the Rho-family GTPase activity through its interaction with ARHGEF25/GEFT. Induces primordial adhesive contact and aggregation of epithelial cells in a Ca(2+)-independent manner. Important for skeletal muscle and heart development. Also involved in striated muscle regeneration and repair and in the regulation of cell spreading. Important for the maintenance of cardiac function. Plays a regulatory function in heart rate dynamics mediated, at least in part, through cAMP-binding and, probably, by increasing cell surface expression of the potassium channel KCNK2 and enhancing current density. Is a caveolae-associated protein important for the preservation of caveolae structural and functional integrity as well as for heart protection against ischemia injury. The sequence is that of Popeye domain-containing protein 1 (Popdc1) from Rattus norvegicus (Rat).